Reading from the N-terminus, the 98-residue chain is NADH-ubiquinone oxidoreductase chain 4L (98 aa).

3 helical membrane passes run methionine 1–phenylalanine 21, leucine 26–methionine 46, and alanine 59–valine 79.

It belongs to the complex I subunit 4L family.

The protein resides in the mitochondrion membrane. It catalyses the reaction a ubiquinone + NADH + 5 H(+)(in) = a ubiquinol + NAD(+) + 4 H(+)(out). In terms of biological role, core subunit of the mitochondrial membrane respiratory chain NADH dehydrogenase (Complex I) which catalyzes electron transfer from NADH through the respiratory chain, using ubiquinone as an electron acceptor. Part of the enzyme membrane arm which is embedded in the lipid bilayer and involved in proton translocation. The chain is NADH-ubiquinone oxidoreductase chain 4L (MT-ND4L) from Polypterus ornatipinnis (Ornate bichir).